Consider the following 378-residue polypeptide: Leukosialin (378 aa).

Residues 1–7 form the signal peptide; sequence WAQVVSQ. The Extracellular portion of the chain corresponds to 8 to 231; that stretch reads ENLPNTMTML…TVPPRPGSSG (224 aa). O-linked (GalNAc...) threonine glycans are attached at residues threonine 13, threonine 15, and threonine 20. The segment at 13 to 33 is disordered; it reads TMTMLPFTPNSESPSTSEALS. O-linked (GalNAc...) serine glycans are attached at residues serine 23, serine 25, and serine 27. Threonine 28 carries an O-linked (GalNAc...) threonine glycan. Residues serine 29 and serine 33 are each glycosylated (O-linked (GalNAc...) serine). A glycan (O-linked (GalNAc...) threonine) is linked at threonine 34. O-linked (GalNAc...) serine glycosylation is found at serine 36 and serine 37. Residue threonine 40 is glycosylated (O-linked (GalNAc...) threonine). 2 O-linked (GalNAc...) serine glycosylation sites follow: serine 108 and serine 113. O-linked (GalNAc...) threonine glycosylation is found at threonine 118, threonine 120, and threonine 124. 2 O-linked (GalNAc...) serine glycosylation sites follow: serine 125 and serine 126. Threonine 174 carries an O-linked (GalNAc...) threonine glycan. 2 O-linked (GalNAc...) serine glycosylation sites follow: serine 176 and serine 180. Residue threonine 183 is glycosylated (O-linked (GalNAc...) threonine). Serine 187 carries an O-linked (GalNAc...) serine glycan. Residue threonine 189 is glycosylated (O-linked (GalNAc...) threonine). A helical membrane pass occupies residues 232-254; the sequence is MLLVSMLIALTVVLVLVALLLLW. The tract at residues 255–285 is required for interaction with EZR, MSN and RDX and for co-localization to microvilli; it reads RQRQKRRTGALTLSRGGKRNGTVDAWAGPAR. Residues 255-378 are Cytoplasmic-facing; the sequence is RQRQKRRTGA…AKDGAAPQSL (124 aa). The Nuclear localization signal signature appears at 259-273; the sequence is KRRTGALTLSRGGKR. Positions 265–378 are disordered; it reads LTLSRGGKRN…AKDGAAPQSL (114 aa). Phosphoserine is present on serine 268. A Phosphothreonine modification is found at threonine 276. Residues 310 to 321 are compositionally biased toward polar residues; the sequence is GSGQRPTLTTFF. Phosphoserine is present on serine 311. At threonine 316 the chain carries Phosphothreonine. A phosphoserine mark is found at serine 322 and serine 326. A Phosphoserine; by PKC/PRKCQ modification is found at serine 330. Position 354 is a phosphoserine (serine 354). Position 361 is a phosphothreonine (threonine 361).

Interacts with SIGLEC1. As to quaternary structure, monomer. Interacts with CTNNB1. Interacts with EZR, MSN and RDX (via FERM domain). Post-translationally, has a high content of sialic acid and O-linked carbohydrate structures. In terms of processing, phosphorylation at Ser-330 is regulated by chemokines, requires its association with ERM proteins (EZR, RDX and MSN) and is essential for its function in the regulation of T-cell trafficking to lymph nodes. Cleavage by CTSG releases its extracellular domain and triggers its intramembrane proteolysis by gamma-secretase releasing the CD43 cytoplasmic tail chain (CD43-ct) which translocates to the nucleus. Post-translationally, sumoylated. In terms of tissue distribution, cell surface of thymocytes, T-lymphocytes, neutrophils, plasma cells and myelomas.

It localises to the membrane. The protein resides in the cell projection. Its subcellular location is the microvillus. It is found in the uropodium. The protein localises to the nucleus. It localises to the PML body. Functionally, predominant cell surface sialoprotein of leukocytes which regulates multiple T-cell functions, including T-cell activation, proliferation, differentiation, trafficking and migration. Positively regulates T-cell trafficking to lymph-nodes via its association with ERM proteins (EZR, RDX and MSN). Negatively regulates Th2 cell differentiation and predisposes the differentiation of T-cells towards a Th1 lineage commitment. Promotes the expression of IFN-gamma by T-cells during T-cell receptor (TCR) activation of naive cells and induces the expression of IFN-gamma by CD4(+) T-cells and to a lesser extent by CD8(+) T-cells. Plays a role in preparing T-cells for cytokine sensing and differentiation into effector cells by inducing the expression of cytokine receptors IFNGR and IL4R, promoting IFNGR and IL4R signaling and by mediating the clustering of IFNGR with TCR. Acts as a major E-selectin ligand responsible for Th17 cell rolling on activated vasculature and recruitment during inflammation. Mediates Th17 cells, but not Th1 cells, adhesion to E-selectin. Acts as a T-cell counter-receptor for SIGLEC1. In terms of biological role, protects cells from apoptotic signals, promoting cell survival. This is Leukosialin (Spn) from Rattus norvegicus (Rat).